The chain runs to 362 residues: Golgi-resident adenosine 3',5'-bisphosphate 3'-phosphatase (362 aa).

Met-1 bears the N-acetylmethionine mark. Residues 1 to 12 (MAPMGIRLSPLG) are Cytoplasmic-facing. Residues 13 to 33 (VAVFCLLGLGVLYHLYSGFLA) form a helical membrane-spanning segment. At 34-362 (GRFSLFGLGG…LPDLEKTGHK (329 aa)) the chain is on the lumenal side. Residues 88-109 (RESNVLHEKSKGKTREGADDKM) are disordered. Asp-113 functions as the Proton acceptor in the catalytic mechanism. Positions 136, 177, 179, and 180 each coordinate Mg(2+). Thr-182 serves as the catalytic Proton acceptor. The AMP site is built by Ser-245 and His-248. An N-linked (GlcNAc...) asparagine glycan is attached at Asn-262. AMP contacts are provided by Gly-271 and Lys-275. Asp-303 contributes to the Mg(2+) binding site.

Belongs to the inositol monophosphatase superfamily. It depends on Mg(2+) as a cofactor. Contains N-linked glycan resistant to endoglycosydase H.

The protein resides in the golgi apparatus. The protein localises to the trans-Golgi network membrane. The enzyme catalyses adenosine 3',5'-bisphosphate + H2O = AMP + phosphate. It functions in the pathway sulfur metabolism. With respect to regulation, strongly inhibited by lithium. Functionally, exhibits 3'-nucleotidase activity toward adenosine 3',5'-bisphosphate (PAP), namely hydrolyzes adenosine 3',5'-bisphosphate into adenosine 5'-monophosphate (AMP) and a phosphate. May play a role in the formation of skeletal elements derived through endochondral ossification, possibly by clearing adenosine 3',5'-bisphosphate produced by Golgi sulfotransferases during glycosaminoglycan sulfation. Has no activity toward 3'-phosphoadenosine 5'-phosphosulfate (PAPS) or inositol phosphate (IP) substrates including I(1)P, I(1,4)P2, I(1,3,4)P3, I(1,4,5)P3 and I(1,3,4,5)P4. This is Golgi-resident adenosine 3',5'-bisphosphate 3'-phosphatase (BPNT2) from Bos taurus (Bovine).